We begin with the raw amino-acid sequence, 531 residues long: Protein SHORT-ROOT (531 aa).

A compositionally biased stretch (low complexity) spans 14 to 39 (QQSDSIITNQSSLSRTSTTTTGSPQT). Disordered stretches follow at residues 14 to 40 (QQSD…PQTA) and 65 to 103 (SSSS…PSST). Residues 81-93 (TYYSPFTTPTQYH) are compositionally biased toward polar residues. The segment covering 94–103 (PATSSTPSST) has biased composition (low complexity). The 396-residue stretch at 134–529 (FDFSANAKWA…QPVVWASAWR (396 aa)) folds into the GRAS domain. The segment at 141–206 (KWADSVLLEA…GSGERCYRTM (66 aa)) is leucine repeat I (LRI). The segment at 225 to 290 (VLKFQEVSPW…DDTPHLRLTT (66 aa)) is VHIID. The VHIID motif lies at 256-260 (IHIVD). Residues 310-343 (EIGNRMEKFARLMGVPFKFNIIHHVGDLSEFDLN) are leucine repeat II (LRII). Residues 353–449 (LAINCVGAMH…ERAAGRAIVD (97 aa)) form a PFYRE region. The tract at residues 452 to 529 (ACEPSDSTER…QPVVWASAWR (78 aa)) is SAW.

It belongs to the GRAS family. Interacts with SCR, SCL23, JKD and MGP. Interacts with SIEL. Association to endosomes and intercellular movement of SHR rely on the interaction with SIEL. In terms of tissue distribution, expressed in the stele and the quiescent center. Not detected in the ground tissue cell lineage. The SHR protein moves from the stele to a single layer of adjacent cells, where it enters the nucleus.

It is found in the cytoplasm. The protein resides in the nucleus. It localises to the early endosome. Its subcellular location is the late endosome. The protein localises to the recycling endosome. Transcription factor required for quiescent center cells specification and maintenance of surrounding stem cells, and for the asymmetric cell division involved in radial pattern formation in roots. Essential for both cell division and cell specification. Regulates the radial organization of the shoot axial organs and is required for normal shoot gravitropism. Directly controls the transcription of SCR, and when associated with SCR, of MGP, RLK, TRI, NUC and SCL3. The chain is Protein SHORT-ROOT from Arabidopsis thaliana (Mouse-ear cress).